Consider the following 335-residue polypeptide: Beta-ketoacyl-[acyl-carrier-protein] synthase III 2 (335 aa).

Catalysis depends on residues C116 and H256. The segment at 257-261 (QANVR) is ACP-binding. N286 is a catalytic residue.

The protein belongs to the thiolase-like superfamily. FabH family. In terms of assembly, homodimer.

It localises to the cytoplasm. It catalyses the reaction malonyl-[ACP] + acetyl-CoA + H(+) = 3-oxobutanoyl-[ACP] + CO2 + CoA. Its pathway is lipid metabolism; fatty acid biosynthesis. Catalyzes the condensation reaction of fatty acid synthesis by the addition to an acyl acceptor of two carbons from malonyl-ACP. Catalyzes the first condensation reaction which initiates fatty acid synthesis and may therefore play a role in governing the total rate of fatty acid production. Possesses both acetoacetyl-ACP synthase and acetyl transacylase activities. Its substrate specificity determines the biosynthesis of branched-chain and/or straight-chain of fatty acids. This is Beta-ketoacyl-[acyl-carrier-protein] synthase III 2 from Bacteroides thetaiotaomicron (strain ATCC 29148 / DSM 2079 / JCM 5827 / CCUG 10774 / NCTC 10582 / VPI-5482 / E50).